Consider the following 250-residue polypeptide: 5'-nucleotidase SurE (250 aa).

A divalent metal cation contacts are provided by Asp8, Asp9, Ser39, and Asn95.

It belongs to the SurE nucleotidase family. A divalent metal cation serves as cofactor.

The protein localises to the cytoplasm. The catalysed reaction is a ribonucleoside 5'-phosphate + H2O = a ribonucleoside + phosphate. Nucleotidase that shows phosphatase activity on nucleoside 5'-monophosphates. The sequence is that of 5'-nucleotidase SurE from Cupriavidus taiwanensis (strain DSM 17343 / BCRC 17206 / CCUG 44338 / CIP 107171 / LMG 19424 / R1) (Ralstonia taiwanensis (strain LMG 19424)).